A 260-amino-acid polypeptide reads, in one-letter code: MQRNSLIGDTIRSLGFLSRLPLPQRWFEDGDDSLPRNARAFPLAGAVLGLLAGAVLFMAYKVNLPPLACAMLAIGALAAMTGALHEDGLGDTADGFFGASSPDRRLDIMKDSRIGTFAALTLIVFVGLKAALLMTIIDRAGAGYAALALVGCEAASRSGMLAFWHALPSARPGGLSDSVGQPQWETVVCGFGIGLAFLVFTLIPAGGFLSLINALVLATGLLFGFARLCIAKIGGQTGDTLGAAQQIGSVAVLAGLVMAL.

The next 6 helical transmembrane spans lie at 40–60 (AFPL…FMAY), 64–84 (LPPL…TGAL), 117–137 (FAAL…MTII), 192–212 (GIGL…LSLI), 214–234 (ALVL…AKIG), and 240–260 (TLGA…VMAL).

This sequence belongs to the CobS family. It depends on Mg(2+) as a cofactor.

The protein resides in the cell inner membrane. The enzyme catalyses alpha-ribazole + adenosylcob(III)inamide-GDP = adenosylcob(III)alamin + GMP + H(+). It carries out the reaction alpha-ribazole 5'-phosphate + adenosylcob(III)inamide-GDP = adenosylcob(III)alamin 5'-phosphate + GMP + H(+). The protein operates within cofactor biosynthesis; adenosylcobalamin biosynthesis; adenosylcobalamin from cob(II)yrinate a,c-diamide: step 7/7. Its function is as follows. Joins adenosylcobinamide-GDP and alpha-ribazole to generate adenosylcobalamin (Ado-cobalamin). Also synthesizes adenosylcobalamin 5'-phosphate from adenosylcobinamide-GDP and alpha-ribazole 5'-phosphate. This chain is Adenosylcobinamide-GDP ribazoletransferase, found in Brucella anthropi (strain ATCC 49188 / DSM 6882 / CCUG 24695 / JCM 21032 / LMG 3331 / NBRC 15819 / NCTC 12168 / Alc 37) (Ochrobactrum anthropi).